A 430-amino-acid polypeptide reads, in one-letter code: C4-dicarboxylate transport protein (430 aa).

Helical transmembrane passes span 8 to 28 (SLYFQVLAAITIGILLGHFYP), 44 to 64 (LIKMIIAPVIFCTVVTGIAGM), 76 to 96 (AALLYFEVVSTIALIIGLVVV), 144 to 164 (AFASGNILQVLLFAVMFGFAL), 184 to 204 (VIFGVINMIMKLAPLGAFGAM), 222 to 242 (LILCFYLTCILFVFLVLGSIA), 289 to 309 (VVGLVIPTGYSFNLDGTSIYL), 326 to 346 (IWHQITLLVVLLLSSKGAAGV), and 352 to 372 (IVLAATLSAVGHLPVAGLALI).

Belongs to the dicarboxylate/amino acid:cation symporter (DAACS) (TC 2.A.23) family.

It is found in the cell inner membrane. In terms of biological role, responsible for the transport of dicarboxylates such as succinate, fumarate, and malate from the periplasm across the membrane. The protein is C4-dicarboxylate transport protein of Pectobacterium atrosepticum (strain SCRI 1043 / ATCC BAA-672) (Erwinia carotovora subsp. atroseptica).